The following is a 955-amino-acid chain: 2-oxoglutarate dehydrogenase E1 component (955 aa).

Belongs to the alpha-ketoglutarate dehydrogenase family. In terms of assembly, homodimer. Part of the 2-oxoglutarate dehydrogenase (OGDH) complex composed of E1 (2-oxoglutarate dehydrogenase), E2 (dihydrolipoamide succinyltransferase) and E3 (dihydrolipoamide dehydrogenase); the complex contains multiple copies of the three enzymatic components (E1, E2 and E3). The cofactor is thiamine diphosphate.

The enzyme catalyses N(6)-[(R)-lipoyl]-L-lysyl-[protein] + 2-oxoglutarate + H(+) = N(6)-[(R)-S(8)-succinyldihydrolipoyl]-L-lysyl-[protein] + CO2. Its function is as follows. E1 component of the 2-oxoglutarate dehydrogenase (OGDH) complex which catalyzes the decarboxylation of 2-oxoglutarate, the first step in the conversion of 2-oxoglutarate to succinyl-CoA and CO(2). This chain is 2-oxoglutarate dehydrogenase E1 component, found in Bacillus cereus (strain 03BB102).